The primary structure comprises 474 residues: Proline--tRNA ligase (474 aa).

Belongs to the class-II aminoacyl-tRNA synthetase family. ProS type 3 subfamily. Homodimer.

The protein resides in the cytoplasm. The catalysed reaction is tRNA(Pro) + L-proline + ATP = L-prolyl-tRNA(Pro) + AMP + diphosphate. Functionally, catalyzes the attachment of proline to tRNA(Pro) in a two-step reaction: proline is first activated by ATP to form Pro-AMP and then transferred to the acceptor end of tRNA(Pro). The protein is Proline--tRNA ligase of Phytoplasma australiense.